A 318-amino-acid chain; its full sequence is N-succinylornithine carbamoyltransferase (318 aa).

Residues 47 to 50 (SLRT), Trp75, and Arg110 contribute to the carbamoyl phosphate site. Glu142 contributes to the N(2)-succinyl-L-ornithine binding site. Residue 147–150 (HPLQ) coordinates carbamoyl phosphate. 2 residues coordinate N(2)-succinyl-L-ornithine: His176 and Lys236. 274-275 (CL) is a binding site for carbamoyl phosphate. Arg278 is a binding site for N(2)-succinyl-L-ornithine. Arg302 lines the carbamoyl phosphate pocket.

This sequence belongs to the aspartate/ornithine carbamoyltransferase superfamily. SOTCase family. Homotrimer.

The enzyme catalyses N(2)-succinyl-L-ornithine + carbamoyl phosphate = N(2)-succinyl-L-citrulline + phosphate + H(+). It participates in amino-acid biosynthesis; L-arginine biosynthesis. Functionally, catalyzes the transfer of the carbamoyl group from carbamoyl phosphate to the delta-amino group of N(2)-succinyl-L-ornithine to produce N(2)-succinyl-L-citrulline. Is essential for arginine biosynthesis. Has no activity with either L-ornithine or L-aspartate as substrate. Also has no detectable AOTCase activity, being unable to convert N(2)-acetyl-L-ornithine to N(2)-acetyl-L-citrulline. This chain is N-succinylornithine carbamoyltransferase, found in Bacteroides fragilis (strain 638R).